The sequence spans 250 residues: Probable transcriptional regulatory protein Cphamn1_0542 (250 aa).

Belongs to the TACO1 family.

The protein localises to the cytoplasm. The sequence is that of Probable transcriptional regulatory protein Cphamn1_0542 from Chlorobium phaeobacteroides (strain BS1).